A 957-amino-acid chain; its full sequence is Glycine dehydrogenase (decarboxylating) (957 aa).

The residue at position 708 (K708) is an N6-(pyridoxal phosphate)lysine.

This sequence belongs to the GcvP family. The glycine cleavage system is composed of four proteins: P, T, L and H. Pyridoxal 5'-phosphate is required as a cofactor.

The catalysed reaction is N(6)-[(R)-lipoyl]-L-lysyl-[glycine-cleavage complex H protein] + glycine + H(+) = N(6)-[(R)-S(8)-aminomethyldihydrolipoyl]-L-lysyl-[glycine-cleavage complex H protein] + CO2. In terms of biological role, the glycine cleavage system catalyzes the degradation of glycine. The P protein binds the alpha-amino group of glycine through its pyridoxal phosphate cofactor; CO(2) is released and the remaining methylamine moiety is then transferred to the lipoamide cofactor of the H protein. The sequence is that of Glycine dehydrogenase (decarboxylating) from Salmonella paratyphi B (strain ATCC BAA-1250 / SPB7).